The sequence spans 285 residues: Ribosomal RNA large subunit methyltransferase F (285 aa).

It belongs to the methyltransferase superfamily. METTL16/RlmF family.

The protein localises to the cytoplasm. It catalyses the reaction adenosine(1618) in 23S rRNA + S-adenosyl-L-methionine = N(6)-methyladenosine(1618) in 23S rRNA + S-adenosyl-L-homocysteine + H(+). In terms of biological role, specifically methylates the adenine in position 1618 of 23S rRNA. This Christiangramia forsetii (strain DSM 17595 / CGMCC 1.15422 / KT0803) (Gramella forsetii) protein is Ribosomal RNA large subunit methyltransferase F.